The sequence spans 358 residues: tRNA (guanine-N(7)-)-methyltransferase (358 aa).

Residues 1–29 (MTPPPPKRQKRDEYRKATAEATSQSGASD) form a disordered region. Residues G99 and 122-123 (EI) contribute to the S-adenosyl-L-methionine site. Over residues 151-186 (TATAASETPSQQQAQIDGKQANANAAADAASPAPST) the composition is skewed to low complexity. The disordered stretch occupies residues 151–194 (TATAASETPSQQQAQIDGKQANANAAADAASPAPSTDTEHMPTT). Residues 209 to 210 (NT) and C229 each bind S-adenosyl-L-methionine. The active site involves D232. An S-adenosyl-L-methionine-binding site is contributed by 330 to 332 (TEE).

Belongs to the class I-like SAM-binding methyltransferase superfamily. TrmB family. As to quaternary structure, forms a complex with trm82.

It localises to the nucleus. It carries out the reaction guanosine(46) in tRNA + S-adenosyl-L-methionine = N(7)-methylguanosine(46) in tRNA + S-adenosyl-L-homocysteine. It functions in the pathway tRNA modification; N(7)-methylguanine-tRNA biosynthesis. Functionally, catalyzes the formation of N(7)-methylguanine at position 46 (m7G46) in tRNA. The polypeptide is tRNA (guanine-N(7)-)-methyltransferase (trm8) (Aspergillus fumigatus (strain CBS 144.89 / FGSC A1163 / CEA10) (Neosartorya fumigata)).